A 91-amino-acid chain; its full sequence is Preprofallaxidin-2 (91 aa).

The first 22 residues, 1–22, serve as a signal peptide directing secretion; it reads MASLKKSLFLVLFLGLVSLSIC. The propeptide occupies 23 to 49; that stretch reads EKEKRENEGNENEEEEENHEEGSEEKR. Residues 24–49 form a disordered region; sequence KEKRENEGNENEEEEENHEEGSEEKR. Residues 31 to 41 are compositionally biased toward acidic residues; that stretch reads GNENEEEEENH. Position 65 is a leucine amide (Leu65). A propeptide spanning residues 69–73 is cleaved from the precursor; that stretch reads SEEKR. Leu89 bears the Leucine amide mark.

This sequence belongs to the frog skin active peptide (FSAP) family. Dermaseptin subfamily. Expressed by the skin glands.

It localises to the secreted. Functionally, fallaxidin-3.1 shows antibacterial activity against the Gram-positive bacteria E.faecalis (MIC=100 uM) and L.lactis (MIC=100 uM). No antibacterial activity against the Gram-positive bacteria B.cereus, L.innocua, M.luteus, S.epidermidis, S.uberis and S.aureus, or the Gram-negative bacteria E.cloacae and E.coli. In terms of biological role, fallaxidin-3.2 shows antibacterial activity against the Gram-positive bacteria E.faecalis (MIC=100 uM) and L.lactis (MIC=500 uM). No antibacterial activity against the Gram-positive bacteria B.cereus, L.innocua, M.luteus, S.epidermidis, S.uberis and S.aureus, or the Gram-negative bacteria E.cloacae and E.coli. The chain is Preprofallaxidin-2 from Litoria fallax (Eastern dwarf tree frog).